Reading from the N-terminus, the 156-residue chain is MAMAMRLPAISRAVTEVASAPVGLRRLFCSNASRFSFLSPQAESQTPARPQAEPSTNLFVSGLSKRTTSEGLRTAFAQFGEVADAKVVTDRVSGYSKGFGFVRYATLEDSAKGIAGMDGKFLDGWVIFAEYARPREQSQSYQPQNNMSRPPYYGNR.

Residues 1 to 28 constitute a mitochondrion transit peptide; that stretch reads MAMAMRLPAISRAVTEVASAPVGLRRLF. The 79-residue stretch at 56–134 folds into the RRM domain; the sequence is TNLFVSGLSK…WVIFAEYARP (79 aa). Position 64 is a phosphoserine (Ser-64). The segment covering 137–148 has biased composition (polar residues); it reads QSQSYQPQNNMS. Residues 137 to 156 form a disordered region; it reads QSQSYQPQNNMSRPPYYGNR.

Interacts with RBG3/ORRM3. Binds to RBG2/ORRM5.

The protein resides in the mitochondrion. In terms of biological role, involved in C-to-U editing of mitochondrial RNA. Functions as minor mitochondrial editing factor. Controls 6 percent of the mitochondrial editing sites. This chain is Organelle RRM domain-containing protein 2, mitochondrial, found in Arabidopsis thaliana (Mouse-ear cress).